The chain runs to 81 residues: Penaeidin-3j (81 aa).

The N-terminal stretch at 1 to 19 is a signal peptide; that stretch reads MRLVVCLVFLASFALVCQG. Gln-20 bears the Pyrrolidone carboxylic acid mark. 3 disulfide bridges follow: Cys-50-Cys-65, Cys-54-Cys-72, and Cys-66-Cys-73. Serine amide is present on Ser-80.

The protein belongs to the penaeidin family.

It localises to the cytoplasmic granule. Antibacterial and antifungal activity. Presents chitin-binding activity. This is Penaeidin-3j from Penaeus vannamei (Whiteleg shrimp).